Reading from the N-terminus, the 150-residue chain is Avidin-related protein 3 (150 aa).

Residues 1 to 24 (MVHTTSPLLLLLLLSLALVAPSLS) form the signal peptide. Residues 26-147 (RKCSLTGKWT…GYNNFTRQRT (122 aa)) form the Avidin-like domain. Cys-28 and Cys-105 are joined by a disulfide. 5 residues coordinate biotin: Asn-36, Ser-40, Tyr-57, Thr-59, and Asp-63. N-linked (GlcNAc...) asparagine glycosylation occurs at Asn-93. Biotin is bound by residues Ser-95, Ser-99, and Asn-140. N-linked (GlcNAc...) asparagine glycosylation occurs at Asn-141.

Belongs to the avidin/streptavidin family. Homotetramer. Post-translationally, glycosylated.

The protein resides in the secreted. In terms of biological role, forms a strong non-covalent specific complex with biotin. The polypeptide is Avidin-related protein 3 (AVR3) (Gallus gallus (Chicken)).